We begin with the raw amino-acid sequence, 1050 residues long: uncharacterized protein (1050 aa).

Coiled-coil stretches lie at residues 1–420 (MEKV…TAKM), 463–627 (YSLL…IREL), and 692–981 (NDSK…NLLS).

This is an uncharacterized protein from Arabidopsis thaliana (Mouse-ear cress).